We begin with the raw amino-acid sequence, 73 residues long: EAGEECDCGAPANPCCDAATCKLRPGAQCAEGLCCDQCRFIKKGKICRRARGDNPDDRCTGQSADCPRNGYYG.

Positions 1 to 73 constitute a Disintegrin domain; sequence EAGEECDCGA…ADCPRNGYYG (73 aa). Intrachain disulfides connect C6–C21, C8–C16, C15–C38, C29–C35, C34–C59, and C47–C66. A Cell attachment site motif is present at residues 51–53; that stretch reads RGD. The disordered stretch occupies residues 51–73; it reads RGDNPDDRCTGQSADCPRNGYYG.

This sequence belongs to the venom metalloproteinase (M12B) family. P-II subfamily. P-IIa sub-subfamily. As to quaternary structure, monomer (disintegrin). In terms of tissue distribution, expressed by the venom gland.

Its subcellular location is the secreted. In terms of biological role, inhibits fibrinogen interaction with platelets. Acts by binding to alpha-IIb/beta-3 (ITGA2B/ITGB3) on the platelet surface and inhibits aggregation induced by ADP, thrombin, platelet-activating factor and collagen. The protein is Disintegrin lachesin of Lachesis muta muta (Bushmaster).